Consider the following 474-residue polypeptide: 3-isopropylmalate dehydratase large subunit (474 aa).

Positions 350, 411, and 414 each coordinate [4Fe-4S] cluster.

It belongs to the aconitase/IPM isomerase family. LeuC type 1 subfamily. As to quaternary structure, heterodimer of LeuC and LeuD. Requires [4Fe-4S] cluster as cofactor.

It carries out the reaction (2R,3S)-3-isopropylmalate = (2S)-2-isopropylmalate. It participates in amino-acid biosynthesis; L-leucine biosynthesis; L-leucine from 3-methyl-2-oxobutanoate: step 2/4. Its function is as follows. Catalyzes the isomerization between 2-isopropylmalate and 3-isopropylmalate, via the formation of 2-isopropylmaleate. This chain is 3-isopropylmalate dehydratase large subunit, found in Hydrogenovibrio crunogenus (strain DSM 25203 / XCL-2) (Thiomicrospira crunogena).